A 251-amino-acid polypeptide reads, in one-letter code: MLAKRIIPCLDVRDGRVVKGINFEGLRDAGSILEQARFYNNEMADELVFLDISASIESRRTTLEEVLKVSGEVFIPLTVGGGISSVERARDAFLHGADKVSVNTAAVNDPVLISRIAERFGSQAVVVAIDVKKVNGEYIVHTHSGKTPTQYEALEWAHRVQELGAGEILLTSMDRDGTQEGYDNEILKRISTSVHIPVIASGGAGNLEHLYEGFTKGHADAALAASIFHFRTYSIREAKEYLRDKGIAVRL.

Active-site residues include D11 and D130.

Belongs to the HisA/HisF family. As to quaternary structure, heterodimer of HisH and HisF.

It is found in the cytoplasm. It carries out the reaction 5-[(5-phospho-1-deoxy-D-ribulos-1-ylimino)methylamino]-1-(5-phospho-beta-D-ribosyl)imidazole-4-carboxamide + L-glutamine = D-erythro-1-(imidazol-4-yl)glycerol 3-phosphate + 5-amino-1-(5-phospho-beta-D-ribosyl)imidazole-4-carboxamide + L-glutamate + H(+). It functions in the pathway amino-acid biosynthesis; L-histidine biosynthesis; L-histidine from 5-phospho-alpha-D-ribose 1-diphosphate: step 5/9. IGPS catalyzes the conversion of PRFAR and glutamine to IGP, AICAR and glutamate. The HisF subunit catalyzes the cyclization activity that produces IGP and AICAR from PRFAR using the ammonia provided by the HisH subunit. This Chlorobaculum parvum (strain DSM 263 / NCIMB 8327) (Chlorobium vibrioforme subsp. thiosulfatophilum) protein is Imidazole glycerol phosphate synthase subunit HisF.